We begin with the raw amino-acid sequence, 271 residues long: 5-deoxy-glucuronate isomerase (271 aa).

Belongs to the isomerase IolB family.

It catalyses the reaction 5-deoxy-D-glucuronate = 5-dehydro-2-deoxy-D-gluconate. Its pathway is polyol metabolism; myo-inositol degradation into acetyl-CoA; acetyl-CoA from myo-inositol: step 4/7. Involved in the isomerization of 5-deoxy-glucuronate (5DG) to 5-dehydro-2-deoxy-D-gluconate (DKG or 2-deoxy-5-keto-D-gluconate). The sequence is that of 5-deoxy-glucuronate isomerase from Bacillus velezensis (strain DSM 23117 / BGSC 10A6 / LMG 26770 / FZB42) (Bacillus amyloliquefaciens subsp. plantarum).